Reading from the N-terminus, the 446-residue chain is Glucose-6-phosphate isomerase (446 aa).

The active-site Proton donor is Glu287. Active-site residues include His308 and Lys422.

It belongs to the GPI family.

The protein resides in the cytoplasm. The catalysed reaction is alpha-D-glucose 6-phosphate = beta-D-fructose 6-phosphate. The protein operates within carbohydrate biosynthesis; gluconeogenesis. It participates in carbohydrate degradation; glycolysis; D-glyceraldehyde 3-phosphate and glycerone phosphate from D-glucose: step 2/4. In terms of biological role, catalyzes the reversible isomerization of glucose-6-phosphate to fructose-6-phosphate. This is Glucose-6-phosphate isomerase from Lactobacillus helveticus (strain DPC 4571).